A 375-amino-acid chain; its full sequence is NADH-ubiquinone oxidoreductase 40 kDa subunit, mitochondrial (375 aa).

The transit peptide at M1–A26 directs the protein to the mitochondrion.

The protein belongs to the complex I NDUFA9 subunit family. As to quaternary structure, complex I is composed of about 40 different subunits. Requires FAD as cofactor.

The protein resides in the mitochondrion matrix. Its function is as follows. Accessory subunit of the mitochondrial membrane respiratory chain NADH dehydrogenase (Complex I), that is believed not to be involved in catalysis. Complex I functions in the transfer of electrons from NADH to the respiratory chain. The immediate electron acceptor for the enzyme is believed to be ubiquinone. This is NADH-ubiquinone oxidoreductase 40 kDa subunit, mitochondrial (nuo40) from Neurospora crassa (strain ATCC 24698 / 74-OR23-1A / CBS 708.71 / DSM 1257 / FGSC 987).